The sequence spans 206 residues: Ras-related protein Rab-14 (206 aa).

Residue 15–22 (GDMGVGKS) coordinates GTP. The Effector region signature appears at 37–45 (SPHTIGVEF). GTP-binding positions include 63 to 67 (DTAGQ) and 121 to 124 (NKKD). Positions 182–206 (PDGGITKNPPQTITDKPQDASKCSC) are disordered. The segment covering 189–206 (NPPQTITDKPQDASKCSC) has biased composition (polar residues). 2 S-geranylgeranyl cysteine lipidation sites follow: C204 and C206. A Cysteine methyl ester modification is found at C206.

This sequence belongs to the small GTPase superfamily. Rab family.

Its subcellular location is the endosome. It localises to the contractile vacuole. It is found in the membrane. The enzyme catalyses GTP + H2O = GDP + phosphate + H(+). Its activity is regulated as follows. Rab activation is generally mediated by a guanine exchange factor (GEF), while inactivation through hydrolysis of bound GTP is catalyzed by a GTPase activating protein (GAP). That Rab is activated by the DENND6A and DENND6B guanine exchange factors (GEF). Functionally, the small GTPases Rab are key regulators of intracellular membrane trafficking, from the formation of transport vesicles to their fusion with membranes. Rabs cycle between an inactive GDP-bound form and an active GTP-bound form that is able to recruit to membranes different set of downstream effectors directly responsible for vesicle formation, movement, tethering and fusion. Regulates the fusion of phagosomes and lysosomes. The chain is Ras-related protein Rab-14 (rab14) from Dictyostelium discoideum (Social amoeba).